We begin with the raw amino-acid sequence, 349 residues long: Inositol-tetrakisphosphate 1-kinase 2 (349 aa).

2 residues coordinate 1D-myo-inositol 1,3,4-trisphosphate: lysine 48 and lysine 90. Residues arginine 125 and lysine 175 each contribute to the ATP site. 1D-myo-inositol 1,3,4-trisphosphate contacts are provided by histidine 186 and lysine 218. Residues 207–218 (QEFVNHGGILFK) and serine 233 each bind ATP. Residues aspartate 298, aspartate 313, and asparagine 315 each coordinate Mg(2+). Asparagine 315 contacts 1D-myo-inositol 1,3,4-trisphosphate.

This sequence belongs to the ITPK1 family. As to quaternary structure, monomer. Requires Mg(2+) as cofactor.

The catalysed reaction is 1D-myo-inositol 3,4,5,6-tetrakisphosphate + ATP = 1D-myo-inositol 1,3,4,5,6-pentakisphosphate + ADP + H(+). It carries out the reaction 1D-myo-inositol 1,3,4-trisphosphate + ATP = 1D-myo-inositol 1,3,4,5-tetrakisphosphate + ADP + H(+). It catalyses the reaction 1D-myo-inositol 1,3,4-trisphosphate + ATP = 1D-myo-inositol 1,3,4,6-tetrakisphosphate + ADP + H(+). Kinase that can phosphorylate various inositol polyphosphate such as Ins(3,4,5,6)P4 or Ins(1,3,4)P3 and participates in phytic acid biosynthesis in developing seeds. Phytic acid is the primary storage form of phosphorus in cereal grains and other plant seeds. This is Inositol-tetrakisphosphate 1-kinase 2 (ITPK2) from Oryza sativa subsp. indica (Rice).